A 510-amino-acid chain; its full sequence is Inositol-3-phosphate synthase (510 aa).

Residues Gly-70, Gly-71, Asn-72, Asn-73, Asp-143, Ile-180, Gln-190, Arg-193, Thr-230, Ala-231, Asn-232, Thr-233, Gly-281, Ser-282, Asp-306, Ser-309, Asn-340, Asn-341, Asp-342, Lys-355, Gly-393, Asp-394, Asp-422, and Ser-423 each contribute to the NAD(+) site.

The protein belongs to the myo-inositol 1-phosphate synthase family. NAD(+) serves as cofactor.

The protein localises to the cytoplasm. The protein resides in the cytosol. Its subcellular location is the nucleus. The catalysed reaction is D-glucose 6-phosphate = 1D-myo-inositol 3-phosphate. It functions in the pathway polyol metabolism; myo-inositol biosynthesis; myo-inositol from D-glucose 6-phosphate: step 1/2. Its function is as follows. Key enzyme in myo-inositol biosynthesis pathway that catalyzes the conversion of glucose 6-phosphate to 1-myo-inositol 1-phosphate in a NAD-dependent manner. The polypeptide is Inositol-3-phosphate synthase (INPS1) (Nicotiana paniculata).